A 362-amino-acid chain; its full sequence is MSQVFNFSAGPAMIFPEVLQKAQNELINWLNQGVSVMEVSHRGKYFMELVTQAEKDLREVYNIPDNYRTLFLQGGARGQFATIPMNLIGKKGKALYLNSGHWSATAAKEARNFAEIDEITIVENGEQTRITDLDFSHIADQYDYVHYCPNETISGVEIFDVPNVGNAVLVADMSSNILSRQIDISKFGVIYAGAQKNLGPAGITLVIIRDDLIGNARKETPSIWNYATQRDADSMINTPPTFAWYLCSLVFKHLKEIGGLEIIEKRNALKAQTLYDYIDSSKLYRNVVAKENRSTMNVTFITGNPELDAKFVAESTAAGLQALKGHKVLGGMRASIYNAMSQNGVEALISFMKKFETENLPQ.

R42 is an L-glutamate binding site. Residues 76-77 (AR), W102, T152, D172, and Q195 contribute to the pyridoxal 5'-phosphate site. K196 carries the N6-(pyridoxal phosphate)lysine modification. 237–238 (NT) is a binding site for pyridoxal 5'-phosphate.

The protein belongs to the class-V pyridoxal-phosphate-dependent aminotransferase family. SerC subfamily. As to quaternary structure, homodimer. The cofactor is pyridoxal 5'-phosphate.

The protein resides in the cytoplasm. It carries out the reaction O-phospho-L-serine + 2-oxoglutarate = 3-phosphooxypyruvate + L-glutamate. The enzyme catalyses 4-(phosphooxy)-L-threonine + 2-oxoglutarate = (R)-3-hydroxy-2-oxo-4-phosphooxybutanoate + L-glutamate. It participates in amino-acid biosynthesis; L-serine biosynthesis; L-serine from 3-phospho-D-glycerate: step 2/3. Its pathway is cofactor biosynthesis; pyridoxine 5'-phosphate biosynthesis; pyridoxine 5'-phosphate from D-erythrose 4-phosphate: step 3/5. In terms of biological role, catalyzes the reversible conversion of 3-phosphohydroxypyruvate to phosphoserine and of 3-hydroxy-2-oxo-4-phosphonooxybutanoate to phosphohydroxythreonine. This is Phosphoserine aminotransferase from Haemophilus influenzae (strain ATCC 51907 / DSM 11121 / KW20 / Rd).